Here is a 258-residue protein sequence, read N- to C-terminus: Indole-3-glycerol phosphate synthase (258 aa).

It belongs to the TrpC family.

It carries out the reaction 1-(2-carboxyphenylamino)-1-deoxy-D-ribulose 5-phosphate + H(+) = (1S,2R)-1-C-(indol-3-yl)glycerol 3-phosphate + CO2 + H2O. Its pathway is amino-acid biosynthesis; L-tryptophan biosynthesis; L-tryptophan from chorismate: step 4/5. The chain is Indole-3-glycerol phosphate synthase from Campylobacter jejuni (strain RM1221).